Consider the following 507-residue polypeptide: Probable lipid II flippase MurJ (507 aa).

13 consecutive transmembrane segments (helical) span residues 3-23, 54-74, 92-112, 132-152, 156-176, 185-205, 268-288, 310-330, 351-371, 379-399, 405-425, 438-458, and 472-492; these read LFRSGIILAFLTFIARIFGLV, IFAEGALSSVFIPIYNEKMLI, LTLIVIIALMQIFMPQLILCI, ITIPYLIFVSLTALLGGILNS, FAAFAFSPIILSVCVIIFTLI, ISISVSLIIAGILQVVFMFIC, IYQFPLSIIGTSFSTILLPEM, IGLLLSLPATFGIIILSHPIT, ISAFALGLPAFILAKILTPIF, TPLKITLFSIIINTNMNLLLM, IGIAVGTSIAAWYNLGLLYSY, IKLFCAKILLCCTLMSIIIAL, and LLIKVSMLGSTIIIGVAIFFG.

This sequence belongs to the MurJ/MviN family.

It is found in the cell inner membrane. The protein operates within cell wall biogenesis; peptidoglycan biosynthesis. In terms of biological role, involved in peptidoglycan biosynthesis. Transports lipid-linked peptidoglycan precursors from the inner to the outer leaflet of the cytoplasmic membrane. The protein is Probable lipid II flippase MurJ of Rickettsia prowazekii (strain Madrid E).